Here is a 103-residue protein sequence, read N- to C-terminus: ATP synthase F(0) complex subunit g, mitochondrial (103 aa).

Residue Ala-2 is modified to N-acetylalanine. N6-acetyllysine occurs at positions 11, 24, 35, and 54.

It belongs to the ATPase g subunit family. Component of the ATP synthase complex composed at least of ATP5F1A/subunit alpha, ATP5F1B/subunit beta, ATP5MC1/subunit c (homooctomer), MT-ATP6/subunit a, MT-ATP8/subunit 8, ATP5ME/subunit e, ATP5MF/subunit f, ATP5MG/subunit g, ATP5MK/subunit k, ATP5MJ/subunit j, ATP5F1C/subunit gamma, ATP5F1D/subunit delta, ATP5F1E/subunit epsilon, ATP5PF/subunit F6, ATP5PB/subunit b, ATP5PD/subunit d, ATP5PO/subunit OSCP. ATP synthase complex consists of a soluble F(1) head domain (subunits alpha(3) and beta(3)) - the catalytic core - and a membrane F(0) domain - the membrane proton channel (subunits c, a, 8, e, f, g, k and j). These two domains are linked by a central stalk (subunits gamma, delta, and epsilon) rotating inside the F1 region and a stationary peripheral stalk (subunits F6, b, d, and OSCP).

The protein localises to the mitochondrion. It is found in the mitochondrion inner membrane. Subunit g, of the mitochondrial membrane ATP synthase complex (F(1)F(0) ATP synthase or Complex V) that produces ATP from ADP in the presence of a proton gradient across the membrane which is generated by electron transport complexes of the respiratory chain. ATP synthase complex consist of a soluble F(1) head domain - the catalytic core - and a membrane F(1) domain - the membrane proton channel. These two domains are linked by a central stalk rotating inside the F(1) region and a stationary peripheral stalk. During catalysis, ATP synthesis in the catalytic domain of F(1) is coupled via a rotary mechanism of the central stalk subunits to proton translocation. In vivo, can only synthesize ATP although its ATP hydrolase activity can be activated artificially in vitro. Part of the complex F(0) domain. This is ATP synthase F(0) complex subunit g, mitochondrial from Homo sapiens (Human).